A 401-amino-acid chain; its full sequence is Large ribosomal subunit protein uL4 (401 aa).

It belongs to the universal ribosomal protein uL4 family.

This is Large ribosomal subunit protein uL4 (RpL4) from Drosophila melanogaster (Fruit fly).